The chain runs to 153 residues: Myoglobin (153 aa).

Residues 2–147 form the Globin domain; the sequence is GLNDQEWQQV…FRNDMASKYK (146 aa). His65 is a binding site for nitrite. O2 is bound at residue His65. His93 lines the heme b pocket.

This sequence belongs to the globin family. In terms of assembly, monomeric.

Its subcellular location is the cytoplasm. It localises to the sarcoplasm. The catalysed reaction is Fe(III)-heme b-[protein] + nitric oxide + H2O = Fe(II)-heme b-[protein] + nitrite + 2 H(+). The enzyme catalyses H2O2 + AH2 = A + 2 H2O. Monomeric heme protein which primary function is to store oxygen and facilitate its diffusion within muscle tissues. Reversibly binds oxygen through a pentacoordinated heme iron and enables its timely and efficient release as needed during periods of heightened demand. Depending on the oxidative conditions of tissues and cells, and in addition to its ability to bind oxygen, it also has a nitrite reductase activity whereby it regulates the production of bioactive nitric oxide. Under stress conditions, like hypoxia and anoxia, it also protects cells against reactive oxygen species thanks to its pseudoperoxidase activity. This chain is Myoglobin (MB), found in Aptenodytes forsteri (Emperor penguin).